Reading from the N-terminus, the 105-residue chain is Heat shock protein HspQ (105 aa).

A disordered region spans residues 75–105 (GEAQEAHPEQPSLDELAESIRHQLQAPRLRN).

This sequence belongs to the HspQ family.

It localises to the cytoplasm. In terms of biological role, involved in the degradation of certain denaturated proteins, including DnaA, during heat shock stress. This Serratia proteamaculans (strain 568) protein is Heat shock protein HspQ.